Here is a 307-residue protein sequence, read N- to C-terminus: Cyclooctat-9-en-7-ol synthase (307 aa).

Mg(2+)-binding residues include Asp110, Asn220, Ser224, and Glu228. Positions 110 to 113 match the DDXXD motif; degenerate motif; it reads DDMD. The NSE/DTE motif motif lies at 220 to 228; that stretch reads NDFYSYDRE.

The protein belongs to the terpene synthase family. Homodimer. Requires Mg(2+) as cofactor.

It catalyses the reaction geranylgeranyl diphosphate + H2O = cyclooctat-9-en-7-ol + diphosphate. In terms of biological role, catalyzes the cyclization of the linear isoprenoid intermediate geranylgeranyl diphosphate to tricycclic cyclooctat-9-en-7-ol in the cyclooctatin biosynthesis pathway. Cyclooctatin is a potent inhibitor of lysophospholipase. This is Cyclooctat-9-en-7-ol synthase from Streptomyces melanosporofaciens.